We begin with the raw amino-acid sequence, 379 residues long: Chaperone protein DnaJ (379 aa).

The region spanning 5-70 is the J domain; the sequence is DYYEILGVSK…QKRAAYDQYG (66 aa). The CR-type zinc-finger motif lies at 134–212; it reads GVTKEIRIPT…CHGHGRVEKS (79 aa). Residues C147, C150, C164, C167, C186, C189, C200, and C203 each contribute to the Zn(2+) site. CXXCXGXG motif repeat units lie at residues 147–154, 164–171, 186–193, and 200–207; these read CDVCHGSG, CPTCHGSG, CPHCQGRG, and CHKCHGHG.

The protein belongs to the DnaJ family. Homodimer. Zn(2+) is required as a cofactor.

The protein resides in the cytoplasm. Functionally, participates actively in the response to hyperosmotic and heat shock by preventing the aggregation of stress-denatured proteins and by disaggregating proteins, also in an autonomous, DnaK-independent fashion. Unfolded proteins bind initially to DnaJ; upon interaction with the DnaJ-bound protein, DnaK hydrolyzes its bound ATP, resulting in the formation of a stable complex. GrpE releases ADP from DnaK; ATP binding to DnaK triggers the release of the substrate protein, thus completing the reaction cycle. Several rounds of ATP-dependent interactions between DnaJ, DnaK and GrpE are required for fully efficient folding. Also involved, together with DnaK and GrpE, in the DNA replication of plasmids through activation of initiation proteins. The chain is Chaperone protein DnaJ from Salmonella agona (strain SL483).